The sequence spans 239 residues: TPR repeat-containing protein TP_0282 (239 aa).

Residues 21–43 traverse the membrane as a helical segment; that stretch reads LLVGVLVAILGGLGLSAGCLLVM. TPR repeat units lie at residues 112 to 145 and 149 to 182; these read AYAQACVADIFFARKEWEKAQQAYVRAAYGARRS and GVYYFNAASCADERGRFEEARELYQRSARVQDFP.

It is found in the cell membrane. This is TPR repeat-containing protein TP_0282 from Treponema pallidum (strain Nichols).